The sequence spans 255 residues: Methylthioribulose-1-phosphate dehydratase (255 aa).

Position 98 (Cys98) interacts with substrate. Residues His116 and His118 each contribute to the Zn(2+) site. The Proton donor/acceptor role is filled by Glu150. His207 provides a ligand contact to Zn(2+).

This sequence belongs to the aldolase class II family. MtnB subfamily. Requires Zn(2+) as cofactor.

The protein localises to the cytoplasm. It carries out the reaction 5-(methylsulfanyl)-D-ribulose 1-phosphate = 5-methylsulfanyl-2,3-dioxopentyl phosphate + H2O. The protein operates within amino-acid biosynthesis; L-methionine biosynthesis via salvage pathway; L-methionine from S-methyl-5-thio-alpha-D-ribose 1-phosphate: step 2/6. Catalyzes the dehydration of methylthioribulose-1-phosphate (MTRu-1-P) into 2,3-diketo-5-methylthiopentyl-1-phosphate (DK-MTP-1-P). The protein is Methylthioribulose-1-phosphate dehydratase of Pyricularia oryzae (strain 70-15 / ATCC MYA-4617 / FGSC 8958) (Rice blast fungus).